Here is a 90-residue protein sequence, read N- to C-terminus: Iron oxidase (90 aa).

The tat-type signal signal peptide spans 1–37 (MSEKDKMITRRDALRNIAVVVGSVATTTMMGVGVADA). The [4Fe-4S] cluster site is built by cysteine 57, cysteine 60, cysteine 69, and cysteine 82.

The protein belongs to the high-potential iron-sulfur protein (HiPIP) family. As to quaternary structure, homomultimer. Predicted to be exported by the Tat system. The position of the signal peptide cleavage has been experimentally proven.

It localises to the periplasm. Catalyzes the oxidation of Fe(2+) to Fe(3+) coupled to cytochrome c552 reduction. The protein is Iron oxidase (iro) of Acidithiobacillus ferrooxidans (Thiobacillus ferrooxidans).